Here is a 70-residue protein sequence, read N- to C-terminus: Turripeptide Gsp9.3 (70 aa).

The N-terminal stretch at 1–20 (MKVYCLLLVLLVGLVSQAHG) is a signal peptide. The Kazal-like domain maps to 21-70 (QLDKKCQMVCTFDYRPVCGSDGRTYPNKCTLTSTACMSQRSITVFHDGEC). 3 disulfide bridges follow: cysteine 26-cysteine 56, cysteine 30-cysteine 49, and cysteine 38-cysteine 70.

The protein belongs to the conopeptide P-like superfamily. As to expression, expressed by the venom duct.

The protein resides in the secreted. Functionally, acts as a neurotoxin by inhibiting an ion channel. May also act as a serine protease inhibitor, since it possess the kazal serine protease inhibitor signature. The chain is Turripeptide Gsp9.3 from Gemmula speciosa (Splendid gem-turris).